The sequence spans 405 residues: Acetate kinase (405 aa).

Asn-7 lines the Mg(2+) pocket. An ATP-binding site is contributed by Lys-14. Arg-99 is a substrate binding site. Catalysis depends on Asp-156, which acts as the Proton donor/acceptor. His-215–Gly-219 is an ATP binding site. Glu-391 contacts Mg(2+).

It belongs to the acetokinase family. In terms of assembly, homodimer. The cofactor is Mg(2+). Requires Mn(2+) as cofactor.

It localises to the cytoplasm. The catalysed reaction is acetate + ATP = acetyl phosphate + ADP. It functions in the pathway metabolic intermediate biosynthesis; acetyl-CoA biosynthesis; acetyl-CoA from acetate: step 1/2. Catalyzes the formation of acetyl phosphate from acetate and ATP. Can also catalyze the reverse reaction. The chain is Acetate kinase from Trichormus variabilis (strain ATCC 29413 / PCC 7937) (Anabaena variabilis).